The primary structure comprises 537 residues: Cytochrome P450 monooxygenase ltmQ (537 aa).

The helical transmembrane segment at 10 to 30 (FPKLNFATIVISGATIIGIIF) threads the bilayer. Residues Asn182, Asn188, and Asn310 are each glycosylated (N-linked (GlcNAc...) asparagine). Position 476 (Cys476) interacts with heme.

This sequence belongs to the cytochrome P450 family. Heme serves as cofactor.

It is found in the membrane. It participates in secondary metabolite biosynthesis. Its function is as follows. Cytochrome P450 monooxygenase; part of the gene clusters that mediates the biosynthesis of lolitrems, indole-diterpene mycotoxins that are potent tremorgens in mammals, and are synthesized by clavicipitaceous fungal endophytes in association with their grass hosts. The geranylgeranyl diphosphate (GGPP) synthase ltmG is proposed to catalyze the first step in lolitrem biosynthesis. LtmG catalyzes a series of iterative condensations of isopentenyl diphosphate (IPP) with dimethylallyl diphosphate (DMAPP), geranyl diphosphate (GPP), and farnesyl diphosphate (FPP), to form GGPP. GGPP then condenses with indole-3-glycerol phosphate to form 3-geranylgeranylindole, an acyclic intermediate, to be incorporated into paxilline. Either ltmG or ltmC could be responsible for this step, as both are putative prenyl transferases. The FAD-dependent monooxygenase ltmM then catalyzes the epoxidation of the two terminal alkenes of the geranylgeranyl moiety, which is subsequently cyclized by ltmB, to paspaline. The cytochrome P450 monooxygenases ltmQ and ltmP can sequentially oxidize paspaline to terpendole E and terpendole F. Alternatively, ltmP converts paspaline to an intermediate which is oxidized by ltmQ to terpendole F. LtmF, ltmK, ltmE and ltmJ appear to be unique to the epichloe endophytes. The prenyltransferase ltmF is involved in the 27-hydroxyl-O-prenylation. The cytochrome P450 monooxygenase ltmK is required for the oxidative acetal ring formation. The multi-functional prenyltransferase ltmE is required for C20- and C21-prenylations of the indole ring of paspalanes and acts together with the cytochrome P450 monooxygenase ltmJ to yield lolitremanes by multiple oxidations and ring closures. The stereoisomer pairs of lolitriol and lolitrem N or lolitrem B and lolitrem F may be attributed to variations in the way in which ring closure can occur under the action of ltmJ. While the major product of this pathway is lolitrem B, the prenyl transferases and cytochrome P450 monooxygenases identified in this pathway have a remarkable versatility in their regio- and stereo-specificities to generate a diverse range of metabolites that are products of a metabolic grid rather than a linear pathway. The polypeptide is Cytochrome P450 monooxygenase ltmQ (Epichloe festucae var. lolii (Neotyphodium lolii)).